Consider the following 311-residue polypeptide: Tyrosine recombinase XerD (311 aa).

In terms of domain architecture, Core-binding (CB) spans 2-95 (KTLALQLQGY…AVRGLHRFAA (94 aa)). The Tyr recombinase domain occupies 116–304 (RLPKSLTIDE…TVHALREVWA (189 aa)). Catalysis depends on residues Arg160, Lys184, His256, Arg259, and His282. Tyr291 functions as the O-(3'-phospho-DNA)-tyrosine intermediate in the catalytic mechanism.

It belongs to the 'phage' integrase family. XerD subfamily. In terms of assembly, forms a cyclic heterotetrameric complex composed of two molecules of XerC and two molecules of XerD.

The protein resides in the cytoplasm. In terms of biological role, site-specific tyrosine recombinase, which acts by catalyzing the cutting and rejoining of the recombining DNA molecules. The XerC-XerD complex is essential to convert dimers of the bacterial chromosome into monomers to permit their segregation at cell division. It also contributes to the segregational stability of plasmids. This chain is Tyrosine recombinase XerD, found in Mycobacterium tuberculosis (strain CDC 1551 / Oshkosh).